The following is a 391-amino-acid chain: Cell cycle checkpoint control protein RAD9A (391 aa).

A Phosphotyrosine modification is found at Tyr28. Residues 51-91 are possesses 3'-5' exonuclease activity; that stretch reads FLFAPLFFQQYQAATPGQDLLRCKILMKSFLSVFRSLAMLE. The interval 266-391 is sufficient for interaction with ABL1; the sequence is SDTDSHSQDL…VLAEDSEGEG (126 aa). Positions 268–282 are enriched in basic and acidic residues; the sequence is TDSHSQDLGSPERHQ. Disordered regions lie at residues 268 to 301 and 319 to 391; these read TDSH…FAND and SRVL…EGEG. 3 positions are modified to phosphoserine: Ser272, Ser277, and Ser328. Ser341 is modified (phosphoserine; by CK2). Ser375 and Ser380 each carry phosphoserine. Ser387 carries the post-translational modification Phosphoserine; by CK2.

Belongs to the rad9 family. In terms of assembly, component of the toroidal 9-1-1 (RAD9-RAD1-HUS1) complex, composed of RAD9A, RAD1 and HUS1. The 9-1-1 complex associates with LIG1, POLB, FEN1, RAD17, HDAC1, RPA1 and RPA2. The 9-1-1 complex associates with the RAD17-RFC complex. RAD9A interacts with BCL2L1, FEN1, RAD9B, ABL1, RPA1, ATAD5 and RPA2. Interacts with DNAJC7. Interacts (when phosphorylated) with TOPBP1. Post-translationally, constitutively phosphorylated on serine and threonine amino acids in absence of DNA damage. Hyperphosphorylated by PRKCD and ABL1 upon DNA damage. Its phosphorylation by PRKCD may be required for the formation of the 9-1-1 complex. Phosphorylated at Ser-341 and Ser-387 by CK2, promoting interaction with TOPBP1.

The protein resides in the nucleus. The enzyme catalyses Exonucleolytic cleavage in the 3'- to 5'-direction to yield nucleoside 5'-phosphates.. Its function is as follows. Component of the 9-1-1 cell-cycle checkpoint response complex that plays a major role in DNA repair. The 9-1-1 complex is recruited to DNA lesion upon damage by the RAD17-replication factor C (RFC) clamp loader complex. Acts then as a sliding clamp platform on DNA for several proteins involved in long-patch base excision repair (LP-BER). The 9-1-1 complex stimulates DNA polymerase beta (POLB) activity by increasing its affinity for the 3'-OH end of the primer-template and stabilizes POLB to those sites where LP-BER proceeds; endonuclease FEN1 cleavage activity on substrates with double, nick, or gap flaps of distinct sequences and lengths; and DNA ligase I (LIG1) on long-patch base excision repair substrates. The 9-1-1 complex is necessary for the recruitment of RHNO1 to sites of double-stranded breaks (DSB) occurring during the S phase. RAD9A possesses 3'-&gt;5' double stranded DNA exonuclease activity. The sequence is that of Cell cycle checkpoint control protein RAD9A (RAD9A) from Homo sapiens (Human).